We begin with the raw amino-acid sequence, 1100 residues long: cGMP-inhibited 3',5'-cyclic phosphodiesterase 3B (1100 aa).

Over residues 1–11 (MRKDERERDAP) the composition is skewed to basic and acidic residues. The interval 1-28 (MRKDERERDAPAMRSPPPPPASAASPPE) is interaction with RAPGEF3. The interval 1–29 (MRKDERERDAPAMRSPPPPPASAASPPES) is disordered. Phosphoserine is present on Ser15. Helical transmembrane passes span 69 to 89 (AGAR…LLGA), 110 to 130 (LSLS…CFLT), 140 to 160 (AGSW…FAAW), 170 to 190 (PAAA…TLAP), 198 to 218 (VLVL…LGAL), and 225 to 245 (LLSC…DHFF). Ser273 bears the Phosphoserine; by PKB/AKT1 or PKB/AKT2 mark. 2 positions are modified to phosphoserine: Ser274 and Ser421. Disordered stretches follow at residues 400 to 423 (RKLH…SSGA) and 570 to 590 (EPDG…SVFS). The span at 408 to 423 (GRTSFPTPQLRRSSGA) shows a compositional bias: polar residues. The tract at residues 415–439 (PQLRRSSGASSLLTNEHCSRWDRSS) is interaction with PIK3R6. A compositionally biased stretch (basic and acidic residues) spans 573–583 (GTDHPSEKSGE). A PDEase domain is found at 627–1061 (PNIDQEVSLD…KIWKEIIEEE (435 aa)). The active-site Proton donor is His713. His713 lines the AMP pocket. Positions 717, 797, 798, and 913 each coordinate Mg(2+). 3 residues coordinate AMP: Asp798, Asp913, and Gln964. A compositionally biased stretch (acidic residues) spans 993 to 1024 (EEGDDTESDDDDDDDDGDGGEELDSDDEETED). Positions 993 to 1033 (EEGDDTESDDDDDDDDGDGGEELDSDDEETEDNLNPKPQRR) are disordered. Positions 1044-1079 (MHHLTENHKIWKEIIEEEEEKCKAEGNKLQVDNASL) form a coiled coil.

Belongs to the cyclic nucleotide phosphodiesterase family. PDE3 subfamily. In terms of assembly, homodimer. Interacts with PIK3CG; regulates PDE3B activity and thereby cAMP levels in cells. Interacts with RAPGEF3 and PIK3R6; form a signaling complex that regulates phosphatidylinositol 3-kinase gamma in angiogenesis. Interacts with ABHD15; this interaction regulates PDE3B's stability and expression and, thereby, impacts the antilipolytic action of insulin. The cofactor is Mg(2+). It depends on Mn(2+) as a cofactor. Phosphorylation at Ser-273 mediates insulin-induced activation of PDE3B. Abundant in adipose tissues.

Its subcellular location is the membrane. The catalysed reaction is a nucleoside 3',5'-cyclic phosphate + H2O = a nucleoside 5'-phosphate + H(+). The enzyme catalyses 3',5'-cyclic AMP + H2O = AMP + H(+). It carries out the reaction 3',5'-cyclic GMP + H2O = GMP + H(+). Inhibited by cGMP. Cyclic nucleotide phosphodiesterase with a dual-specificity for the second messengers cAMP and cGMP, which are key regulators of many important physiological processes. Regulates angiogenesis by inhibiting the cAMP-dependent guanine nucleotide exchange factor RAPGEF3 and downstream phosphatidylinositol 3-kinase gamma-mediated signaling. Controls cardiac contractility by reducing cAMP concentration in cardiocytes. The polypeptide is cGMP-inhibited 3',5'-cyclic phosphodiesterase 3B (Mus musculus (Mouse)).